The primary structure comprises 297 residues: Oxidoreductase aprR (297 aa).

Belongs to the NmrA-type oxidoreductase family. Isoflavone reductase subfamily.

The protein operates within secondary metabolite biosynthesis. Its function is as follows. Oxidoreductase; part of the gene cluster that mediates the biosynthesis of the asperipin-2a, a bicyclic peptide that possesses two macrocyclic ether rings consisting of 14- and 17-membered paracyclophans. The pathway starts with the processing of the precursor aprA by kexin proteases to produce 11 identical copies of the hexapeptide Phe-Tyr-Tyr-Thr-Gly-Tyr. Macrocyclization of asperipin-2a may accompany an alpha-hydroxylation-dehydration sequence to give an imine, which is readily hydrolyzed to yield putative ketone intermediate. The reductase aprR may be required for the final reduction to yield asperipin-2a. In Aspergillus flavus (strain ATCC 200026 / FGSC A1120 / IAM 13836 / NRRL 3357 / JCM 12722 / SRRC 167), this protein is Oxidoreductase aprR.